The chain runs to 739 residues: Catalase-peroxidase (739 aa).

A signal peptide spans 1–23 (MLKKIVTALGMSGMLLAANSAIA). A cross-link (tryptophyl-tyrosyl-methioninium (Trp-Tyr) (with M-247)) is located at residues 100–221 (WHDAGTYRLA…YAATQMGLIY (122 aa)). The active-site Proton acceptor is His-101. The segment at residues 221-247 (YVNPEGPDGKPDIKGAASEIRQAFRAM) is a cross-link (tryptophyl-tyrosyl-methioninium (Tyr-Met) (with W-100)). Residue His-262 participates in heme b binding.

Belongs to the peroxidase family. Peroxidase/catalase subfamily. Homodimer or homotetramer. Heme b serves as cofactor. In terms of processing, formation of the three residue Trp-Tyr-Met cross-link is important for the catalase, but not the peroxidase activity of the enzyme.

The enzyme catalyses H2O2 + AH2 = A + 2 H2O. It catalyses the reaction 2 H2O2 = O2 + 2 H2O. Its function is as follows. Bifunctional enzyme with both catalase and broad-spectrum peroxidase activity. This is Catalase-peroxidase from Francisella philomiragia subsp. philomiragia (strain ATCC 25017 / CCUG 19701 / FSC 153 / O#319-036).